We begin with the raw amino-acid sequence, 214 residues long: MSLKEQLGEELYGQVLAKLGEGAKLVDISDGSFIPKEKFDAVNSEKKSLEQQLTDRDQQLQELSTKATGHDELSAKIADLQKANEEAKQAFEAEKQQLKYEHALETALRDSGAKNPKAVKALLDTESIKLDGDKLLGFEDQIKALKEQEDYLFKGTEPNGGVQGTPPPGKGADLGGLPTKKNPFKQGPDFNLTEQGILFRENPELAKKLQAEAQ.

Positions 36 to 105 form a coiled coil; it reads KEKFDAVNSE…QQLKYEHALE (70 aa). The interval 154–190 is disordered; the sequence is KGTEPNGGVQGTPPPGKGADLGGLPTKKNPFKQGPDF.

This sequence belongs to the SPP1-like scaffolding protein family. Homodimer. Interacts with the capsid protein gp13.

Functionally, scaffolding protein involved in the icosahedric procapsid assembly. Coassembles with the capsid proteins to form the procapsid, in which the scaffolding protein is found within the external shell of icosahedrally arranged capsid protein subunits. In a subsequent step the scaffolding protein molecules are released from the procapsid. This is Capsid assembly scaffolding protein from Bacillus phage SPP1 (Bacteriophage SPP1).